The primary structure comprises 339 residues: Uroporphyrinogen decarboxylase (339 aa).

Substrate is bound by residues 23 to 27, Asp72, Tyr147, Thr202, and His315; that span reads RQAGR.

It belongs to the uroporphyrinogen decarboxylase family. As to quaternary structure, homodimer.

It is found in the cytoplasm. The enzyme catalyses uroporphyrinogen III + 4 H(+) = coproporphyrinogen III + 4 CO2. It functions in the pathway porphyrin-containing compound metabolism; protoporphyrin-IX biosynthesis; coproporphyrinogen-III from 5-aminolevulinate: step 4/4. In terms of biological role, catalyzes the decarboxylation of four acetate groups of uroporphyrinogen-III to yield coproporphyrinogen-III. This Geobacter sp. (strain M21) protein is Uroporphyrinogen decarboxylase.